Consider the following 90-residue polypeptide: UPF0297 protein Swol_0469 (90 aa).

This sequence belongs to the UPF0297 family.

The polypeptide is UPF0297 protein Swol_0469 (Syntrophomonas wolfei subsp. wolfei (strain DSM 2245B / Goettingen)).